The chain runs to 34 residues: N(4)-(Beta-N-acetylglucosaminyl)-L-asparaginase (34 aa).

The active-site Nucleophile is Thr-18.

It belongs to the Ntn-hydrolase family. As to quaternary structure, heterotetramer of two alpha and two beta chains arranged as a dimer of alpha/beta heterodimers. Cleaved into an alpha and beta chain by autocatalysis; this activates the enzyme. The N-terminal residue of the beta subunit is responsible for the nucleophile hydrolase activity. Post-translationally, N-glycosylated.

The protein localises to the lysosome. The catalysed reaction is N(4)-(beta-N-acetyl-D-glucosaminyl)-L-asparagine + H2O = N-acetyl-beta-D-glucosaminylamine + L-aspartate + H(+). In terms of biological role, cleaves the GlcNAc-Asn bond which joins oligosaccharides to the peptide of asparagine-linked glycoproteins. The chain is N(4)-(Beta-N-acetylglucosaminyl)-L-asparaginase (AGA) from Sus scrofa (Pig).